The sequence spans 204 residues: Leucyl/phenylalanyl-tRNA--protein transferase (204 aa).

Belongs to the L/F-transferase family.

Its subcellular location is the cytoplasm. The catalysed reaction is N-terminal L-lysyl-[protein] + L-leucyl-tRNA(Leu) = N-terminal L-leucyl-L-lysyl-[protein] + tRNA(Leu) + H(+). It catalyses the reaction N-terminal L-arginyl-[protein] + L-leucyl-tRNA(Leu) = N-terminal L-leucyl-L-arginyl-[protein] + tRNA(Leu) + H(+). The enzyme catalyses L-phenylalanyl-tRNA(Phe) + an N-terminal L-alpha-aminoacyl-[protein] = an N-terminal L-phenylalanyl-L-alpha-aminoacyl-[protein] + tRNA(Phe). Its function is as follows. Functions in the N-end rule pathway of protein degradation where it conjugates Leu, Phe and, less efficiently, Met from aminoacyl-tRNAs to the N-termini of proteins containing an N-terminal arginine or lysine. The chain is Leucyl/phenylalanyl-tRNA--protein transferase from Rhizobium johnstonii (strain DSM 114642 / LMG 32736 / 3841) (Rhizobium leguminosarum bv. viciae).